A 123-amino-acid chain; its full sequence is Holo-[acyl-carrier-protein] synthase (123 aa).

Mg(2+)-binding residues include Asp8 and Glu60.

The protein belongs to the P-Pant transferase superfamily. AcpS family. Requires Mg(2+) as cofactor.

It is found in the cytoplasm. It carries out the reaction apo-[ACP] + CoA = holo-[ACP] + adenosine 3',5'-bisphosphate + H(+). Its function is as follows. Transfers the 4'-phosphopantetheine moiety from coenzyme A to a Ser of acyl-carrier-protein. This Wolbachia pipientis wMel protein is Holo-[acyl-carrier-protein] synthase.